The following is a 262-amino-acid chain: Sulfur carrier protein FdhD (262 aa).

The Cysteine persulfide intermediate role is filled by C107.

Belongs to the FdhD family.

It localises to the cytoplasm. Required for formate dehydrogenase (FDH) activity. Acts as a sulfur carrier protein that transfers sulfur from IscS to the molybdenum cofactor prior to its insertion into FDH. In Bacillus subtilis (strain 168), this protein is Sulfur carrier protein FdhD.